The following is a 278-amino-acid chain: uncharacterized protein (278 aa).

This is an uncharacterized protein from Schizosaccharomyces pombe (strain 972 / ATCC 24843) (Fission yeast).